The chain runs to 366 residues: 2-aminoethylphosphonate--pyruvate transaminase (366 aa).

An N6-(pyridoxal phosphate)lysine modification is found at lysine 192.

The protein belongs to the class-V pyridoxal-phosphate-dependent aminotransferase family. PhnW subfamily. Homodimer. Pyridoxal 5'-phosphate is required as a cofactor.

The catalysed reaction is (2-aminoethyl)phosphonate + pyruvate = phosphonoacetaldehyde + L-alanine. Functionally, involved in phosphonate degradation. The sequence is that of 2-aminoethylphosphonate--pyruvate transaminase (phnW) from Lysinibacillus sphaericus (strain C3-41).